The primary structure comprises 269 residues: Energy-coupling factor transporter transmembrane protein EcfT (269 aa).

5 helical membrane-spanning segments follow: residues 28–48 (MIIY…LLLL), 49–69 (AFTL…FNGV), 73–93 (IGII…GSVL), 109–129 (AILI…LTLT), and 246–266 (TLAI…KSPS).

This sequence belongs to the energy-coupling factor EcfT family. In terms of assembly, forms a stable energy-coupling factor (ECF) transporter complex composed of 2 membrane-embedded substrate-binding proteins (S component), 2 ATP-binding proteins (A component) and 2 transmembrane proteins (T component). May be able to interact with more than 1 S component at a time.

It is found in the cell membrane. Transmembrane (T) component of an energy-coupling factor (ECF) ABC-transporter complex. Unlike classic ABC transporters this ECF transporter provides the energy necessary to transport a number of different substrates. In Streptococcus equi subsp. equi (strain 4047), this protein is Energy-coupling factor transporter transmembrane protein EcfT.